The sequence spans 580 residues: Glutamine--tRNA ligase (580 aa).

Positions 51-61 (PEPNGYLHIGH) match the 'HIGH' region motif. ATP-binding positions include 52–54 (EPN) and 58–64 (HIGHAKS). The L-glutamine site is built by Asp-84 and Tyr-233. Residues Thr-252 and 287 to 288 (RL) each bind ATP. A 'KMSKS' region motif is present at residues 294 to 298 (ITSKR).

It belongs to the class-I aminoacyl-tRNA synthetase family. Monomer.

The protein localises to the cytoplasm. It catalyses the reaction tRNA(Gln) + L-glutamine + ATP = L-glutaminyl-tRNA(Gln) + AMP + diphosphate. The sequence is that of Glutamine--tRNA ligase from Ralstonia nicotianae (strain ATCC BAA-1114 / GMI1000) (Ralstonia solanacearum).